A 43-amino-acid polypeptide reads, in one-letter code: Photosystem I reaction center subunit IX (43 aa).

Residues 7–27 form a helical membrane-spanning segment; the sequence is YLSTAPVLATFWFGLLAGLLI.

It belongs to the PsaJ family.

It localises to the plastid. It is found in the chloroplast thylakoid membrane. Functionally, may help in the organization of the PsaE and PsaF subunits. The chain is Photosystem I reaction center subunit IX from Gnetum parvifolium (Small-leaved jointfir).